A 178-amino-acid polypeptide reads, in one-letter code: uncharacterized protein (178 aa).

A helical membrane pass occupies residues leucine 7–glutamate 27.

The protein resides in the membrane. This is an uncharacterized protein from Methanocaldococcus jannaschii (strain ATCC 43067 / DSM 2661 / JAL-1 / JCM 10045 / NBRC 100440) (Methanococcus jannaschii).